We begin with the raw amino-acid sequence, 243 residues long: 2-C-methyl-D-erythritol 4-phosphate cytidylyltransferase (243 aa).

It belongs to the IspD/TarI cytidylyltransferase family. IspD subfamily.

The enzyme catalyses 2-C-methyl-D-erythritol 4-phosphate + CTP + H(+) = 4-CDP-2-C-methyl-D-erythritol + diphosphate. The protein operates within isoprenoid biosynthesis; isopentenyl diphosphate biosynthesis via DXP pathway; isopentenyl diphosphate from 1-deoxy-D-xylulose 5-phosphate: step 2/6. In terms of biological role, catalyzes the formation of 4-diphosphocytidyl-2-C-methyl-D-erythritol from CTP and 2-C-methyl-D-erythritol 4-phosphate (MEP). This is 2-C-methyl-D-erythritol 4-phosphate cytidylyltransferase from Rhodopirellula baltica (strain DSM 10527 / NCIMB 13988 / SH1).